We begin with the raw amino-acid sequence, 115 residues long: Large ribosomal subunit protein uL18 (115 aa).

Positions 1–29 (MISKPDKNKLRQKRHTRVRGKISGTSETP) are disordered. Basic residues predominate over residues 10–20 (LRQKRHTRVRG).

This sequence belongs to the universal ribosomal protein uL18 family. As to quaternary structure, part of the 50S ribosomal subunit; part of the 5S rRNA/L5/L18/L25 subcomplex. Contacts the 5S and 23S rRNAs.

Functionally, this is one of the proteins that bind and probably mediate the attachment of the 5S RNA into the large ribosomal subunit, where it forms part of the central protuberance. This is Large ribosomal subunit protein uL18 from Lactococcus lactis subsp. lactis (strain IL1403) (Streptococcus lactis).